Consider the following 454-residue polypeptide: tRNA modification GTPase MnmE (454 aa).

3 residues coordinate (6S)-5-formyl-5,6,7,8-tetrahydrofolate: arginine 23, glutamate 80, and lysine 120. The TrmE-type G domain occupies 216 to 377 (GMKVVIAGRP…LRNHLKQSMG (162 aa)). A K(+)-binding site is contributed by asparagine 226. Residues 226–231 (NAGKSS), 245–251 (TDIAGTT), 270–273 (DTAG), 335–338 (NKAD), and 358–360 (SAR) each bind GTP. Position 230 (serine 230) interacts with Mg(2+). K(+)-binding residues include threonine 245, isoleucine 247, and threonine 250. Threonine 251 is a binding site for Mg(2+). Lysine 454 is a (6S)-5-formyl-5,6,7,8-tetrahydrofolate binding site.

Belongs to the TRAFAC class TrmE-Era-EngA-EngB-Septin-like GTPase superfamily. TrmE GTPase family. Homodimer. Heterotetramer of two MnmE and two MnmG subunits. K(+) serves as cofactor.

The protein localises to the cytoplasm. Functionally, exhibits a very high intrinsic GTPase hydrolysis rate. Involved in the addition of a carboxymethylaminomethyl (cmnm) group at the wobble position (U34) of certain tRNAs, forming tRNA-cmnm(5)s(2)U34. The chain is tRNA modification GTPase MnmE from Shigella boydii serotype 18 (strain CDC 3083-94 / BS512).